The chain runs to 141 residues: ATP synthase epsilon chain (141 aa).

This sequence belongs to the ATPase epsilon chain family. F-type ATPases have 2 components, CF(1) - the catalytic core - and CF(0) - the membrane proton channel. CF(1) has five subunits: alpha(3), beta(3), gamma(1), delta(1), epsilon(1). CF(0) has three main subunits: a, b and c.

Its subcellular location is the cell inner membrane. Its function is as follows. Produces ATP from ADP in the presence of a proton gradient across the membrane. The polypeptide is ATP synthase epsilon chain (Burkholderia thailandensis (strain ATCC 700388 / DSM 13276 / CCUG 48851 / CIP 106301 / E264)).